The sequence spans 205 residues: uncharacterized protein (205 aa).

The Cytoplasmic segment spans residues 1–63 (MQRTRELESS…QHPKVAKFLK (63 aa)). Residues 64–84 (VQLVFDLISLFIFATHQLLLL) traverse the membrane as a helical segment. At 85-124 (EDGNFGKHYFKRKTKRCSKFSCSRCNANAHHPKWFKFKHS) the chain is on the extracellular side. The helical transmembrane segment at 125–145 (LLCLGTFCFGVYSLVKINKFF) threads the bilayer. The Cytoplasmic portion of the chain corresponds to 146–205 (KTDQTVDLNRLLELFFWQLNAILNMKLFAFYGDHLESHSAPLDVYEDSFANKSSSGGDEV).

The protein localises to the membrane. This is an uncharacterized protein from Saccharomyces cerevisiae (strain ATCC 204508 / S288c) (Baker's yeast).